A 711-amino-acid polypeptide reads, in one-letter code: Receptor-like protein 43 (711 aa).

The signal sequence occupies residues 1–30 (MKGFWNSKSTIRITLSFIFLFISQFSDVLA). Residues 31–666 (APTRHLCRPE…EDEEVISWIA (636 aa)) are Extracellular-facing. Residues Asn-78, Asn-114, Asn-143, Asn-167, and Asn-191 are each glycosylated (N-linked (GlcNAc...) asparagine). LRR repeat units lie at residues 120–143 (LHFL…SIEN), 144–168 (LSHL…IGNL), 170–192 (HLTF…IGNL), 193–216 (SHLT…IGGL), 218–240 (HLTT…IGNL), 241–266 (SNLT…NLSQ), 268–288 (TRLD…LWTL), and 289–316 (PNLF…SMGH). Residues Asn-239, Asn-242, Asn-252, and Asn-263 are each glycosylated (N-linked (GlcNAc...) asparagine). N-linked (GlcNAc...) asparagine glycosylation is found at Asn-295, Asn-323, Asn-347, Asn-362, and Asn-372. One copy of the LRR 9; degenerate repeat lies at 317-334 (LLGSNNNFTGKIPSFICE). LRR repeat units lie at residues 335-358 (LRSL…CMGN), 360-384 (KSNL…IFEI), 386-406 (RSLD…LRFF), 407-430 (STLE…LTSL), 431-452 (PKLQ…EASF), 453-476 (LKLR…YFVK), 519-543 (LTIY…IGLL), 544-567 (KELL…MGKL), 568-591 (TALE…IGNL), and 593-616 (FLSC…QFLT). Residue Asn-420 is glycosylated (N-linked (GlcNAc...) asparagine). Asn-466 carries an N-linked (GlcNAc...) asparagine glycan. 3 N-linked (GlcNAc...) asparagine glycosylation sites follow: Asn-550, Asn-590, and Asn-598. A helical transmembrane segment spans residues 667-687 (AAIGFIPGIVLGLTIGYILVF). The Cytoplasmic segment spans residues 688 to 711 (YKPEWFIKTFGRNNCRRRSTTTTH).

This sequence belongs to the RLP family.

It localises to the cell membrane. The protein is Receptor-like protein 43 of Arabidopsis thaliana (Mouse-ear cress).